The primary structure comprises 101 residues: Small ribosomal subunit protein uS14 (101 aa).

It belongs to the universal ribosomal protein uS14 family. In terms of assembly, part of the 30S ribosomal subunit. Contacts proteins S3 and S10.

In terms of biological role, binds 16S rRNA, required for the assembly of 30S particles and may also be responsible for determining the conformation of the 16S rRNA at the A site. This Vesicomyosocius okutanii subsp. Calyptogena okutanii (strain HA) protein is Small ribosomal subunit protein uS14.